A 255-amino-acid polypeptide reads, in one-letter code: Ribonuclease HII (255 aa).

The 184-residue stretch at 72–255 (RLIAGIDEVG…RTFAPIKDMI (184 aa)) folds into the RNase H type-2 domain. A divalent metal cation is bound by residues D78, E79, and D170.

Belongs to the RNase HII family. The cofactor is Mn(2+). Mg(2+) serves as cofactor.

The protein resides in the cytoplasm. It carries out the reaction Endonucleolytic cleavage to 5'-phosphomonoester.. Endonuclease that specifically degrades the RNA of RNA-DNA hybrids. The sequence is that of Ribonuclease HII from Enterococcus faecalis (strain ATCC 700802 / V583).